A 454-amino-acid polypeptide reads, in one-letter code: GTPase Der (454 aa).

2 consecutive EngA-type G domains span residues 3–167 (PVIT…GIAE) and 181–354 (MKIA…AAAM). Residues 9–16 (GRPNVGKS), 56–60 (DTGGF), 119–122 (NKTE), 187–194 (GRPNVGKS), 234–238 (DTAGL), and 299–302 (NKWD) each bind GTP. Residues 355 to 439 (AKLPTPRLTR…PLRIQMNTAK (85 aa)) form the KH-like domain.

Belongs to the TRAFAC class TrmE-Era-EngA-EngB-Septin-like GTPase superfamily. EngA (Der) GTPase family. In terms of assembly, associates with the 50S ribosomal subunit.

Its function is as follows. GTPase that plays an essential role in the late steps of ribosome biogenesis. This is GTPase Der from Polynucleobacter asymbioticus (strain DSM 18221 / CIP 109841 / QLW-P1DMWA-1) (Polynucleobacter necessarius subsp. asymbioticus).